Reading from the N-terminus, the 158-residue chain is Naphthalene 1,2-dioxygenase system, small oxygenase component (158 aa).

Belongs to the bacterial ring-hydroxylating dioxygenase beta subunit family. As to quaternary structure, the naphthalene dioxygenase (NDO) multicomponent enzyme system is composed of an electron transfer component and a dioxygenase component (iron sulfur protein (ISP)). The electron transfer component is composed of a ferredoxin reductase (NdoR) and a ferredoxin (NdoA), and the dioxygenase component is formed of a heterohexamer (trimer of heterodimers) of three large alpha subunits (NdoB) and three small beta subunits (NdoC).

The protein operates within aromatic compound metabolism; naphthalene degradation. Component of the naphthalene dioxygenase (NDO) multicomponent enzyme system which catalyzes the incorporation of both atoms of molecular oxygen into naphthalene to form cis-(1R,2S)-dihydroxy-1,2-dihydronaphthalene. The beta subunit seems to have a structural role in the holoenzyme. In Pseudomonas fluorescens, this protein is Naphthalene 1,2-dioxygenase system, small oxygenase component.